The following is a 264-amino-acid chain: 3-methyl-2-oxobutanoate hydroxymethyltransferase (264 aa).

Mg(2+) is bound by residues D45 and D84. 3-methyl-2-oxobutanoate contacts are provided by residues 45–46, D84, and K112; that span reads DS. E114 serves as a coordination point for Mg(2+). E181 functions as the Proton acceptor in the catalytic mechanism.

Belongs to the PanB family. As to quaternary structure, homodecamer; pentamer of dimers. Mg(2+) is required as a cofactor.

Its subcellular location is the cytoplasm. It catalyses the reaction 3-methyl-2-oxobutanoate + (6R)-5,10-methylene-5,6,7,8-tetrahydrofolate + H2O = 2-dehydropantoate + (6S)-5,6,7,8-tetrahydrofolate. It functions in the pathway cofactor biosynthesis; (R)-pantothenate biosynthesis; (R)-pantoate from 3-methyl-2-oxobutanoate: step 1/2. In terms of biological role, catalyzes the reversible reaction in which hydroxymethyl group from 5,10-methylenetetrahydrofolate is transferred onto alpha-ketoisovalerate to form ketopantoate. This is 3-methyl-2-oxobutanoate hydroxymethyltransferase from Escherichia coli O8 (strain IAI1).